The following is a 126-amino-acid chain: Protein mmf2, mitochondrial (126 aa).

This sequence belongs to the RutC family.

The protein localises to the mitochondrion. It is found in the cytoplasm. Its function is as follows. Plays a role in the maintenance of mitochondrial DNA. This Schizosaccharomyces pombe (strain 972 / ATCC 24843) (Fission yeast) protein is Protein mmf2, mitochondrial (mmf2).